A 361-amino-acid chain; its full sequence is MWVNDINIMSYQAMARNYINGKWRHAPNRADPCGVCRPVPLLCPVNGGACDPMGPCGLAASSKCSPQCGPCSPNFPYPTGPGGTTICDFAAAACGGATGNVCNMCPGGSCGGIGGCYGANSPCGLNGTIGCGGCGSGCCGSQVGTGFHLARGSCDPNYVSGCSSPCGTCRPPNAPSTLCDLALLGISPVPLGMPVSQSVTTLGIPPGAVPPPPPVPITGGVPPFGGPSCGPTVFGGGSFGGSCGGSCGGSCGGGSCGGGSCGGKSGKKDCCKSCRKGKKCKCKKKKCCGVEQFSVCTDGPSIQIGGPCAPPPPPIPPIPGVGVSYDTQVGPAIPLNQCDYPWAEYWPWVVGSWAGQYTNEM.

This is an uncharacterized protein from Acanthamoeba polyphaga (Amoeba).